The primary structure comprises 411 residues: Alpha-1-antiproteinase (411 aa).

Residues 1 to 24 (MAPSISRGLLLLAALCCLAPSFLA) form the signal peptide. Ser33 is subject to Phosphoserine. 3 N-linked (GlcNAc...) asparagine glycosylation sites follow: Asn64, Asn101, and Asn265. The segment at 367–386 (GATVVEAVPMSLPPQVKFDH) is RCL. Ser377 carries the phosphoserine modification.

The protein belongs to the serpin family. In terms of assembly, interacts with CELA2A. Interacts with ERGIC3 and LMAN1/ERGIC53. Interacts with PRSS1/Trypsin. Plasma.

Its subcellular location is the secreted. In terms of biological role, inhibitor of serine proteases. The primary target is elastase, but also has a moderate affinity for plasmin and thrombin. The sequence is that of Alpha-1-antiproteinase (Serpina1) from Rattus norvegicus (Rat).